Reading from the N-terminus, the 286-residue chain is uncharacterized protein (286 aa).

A helical membrane pass occupies residues 8–28 (PLSGFISSLIWWLLFFYLIMA).

It to M.jannaschii MJ1495.

Its subcellular location is the membrane. This is an uncharacterized protein from Methanocaldococcus jannaschii (strain ATCC 43067 / DSM 2661 / JAL-1 / JCM 10045 / NBRC 100440) (Methanococcus jannaschii).